A 227-amino-acid polypeptide reads, in one-letter code: Large ribosomal subunit protein uL3 (227 aa).

Residue glutamine 154 is modified to N5-methylglutamine.

It belongs to the universal ribosomal protein uL3 family. In terms of assembly, part of the 50S ribosomal subunit. Forms a cluster with proteins L14 and L19. In terms of processing, methylated by PrmB.

Functionally, one of the primary rRNA binding proteins, it binds directly near the 3'-end of the 23S rRNA, where it nucleates assembly of the 50S subunit. The polypeptide is Large ribosomal subunit protein uL3 (Acidiphilium cryptum (strain JF-5)).